The primary structure comprises 771 residues: Probable glycosyltransferase STELLO1 (771 aa).

Positions 1–23 are disordered; it reads MLVQDRAAPSPAKPPKSQIRELP. The Cytoplasmic portion of the chain corresponds to 1–50; that stretch reads MLVQDRAAPSPAKPPKSQIRELPTHQQIRRRFSEPKNLDFSTWFSENLSR. Residues 51–71 form a helical membrane-spanning segment; sequence IAVFSLLIVTIVAFFFLYNTT. At 72–771 the chain is on the lumenal side; the sequence is DTASLLCFQS…EGDPLLMELV (700 aa). Residues asparagine 242 and asparagine 729 are each glycosylated (N-linked (GlcNAc...) asparagine).

It belongs to the STELLO family. Homo- and heterodimer with STL2. Interacts with CESA1, CESA3, CESA4, CESA6, CESA7 and CESA8, but not with GOT1. As to expression, expressed in cells that are expanding or producing secondary cell walls.

The protein localises to the golgi apparatus membrane. In terms of biological role, probable glycosyltransferase regulating the assembly and trafficking of cellulose synthase complexes. This Arabidopsis thaliana (Mouse-ear cress) protein is Probable glycosyltransferase STELLO1.